We begin with the raw amino-acid sequence, 276 residues long: Palmitoyltransferase ZDHHC22 (276 aa).

Residues 1–9 are Cytoplasmic-facing; that stretch reads MGKLKLLNT. The helical transmembrane segment at 10 to 30 threads the bilayer; sequence IAPAYFYAATVVTFALHFLLF. Over 31 to 45 the chain is Lumenal; that stretch reads TPTIFQSSDVTINPA. Residues 46-66 traverse the membrane as a helical segment; that stretch reads MLAHISIFLFLMGNALGNYIM. Over 67–131 the chain is Cytoplasmic; sequence TIRNPSESAN…NCIGNRNMRY (65 aa). Positions 101–137 constitute a DHHC domain; it reads HFCKVCKKVILKRDHHCFFTGNCIGNRNMRYFIMFSI. Catalysis depends on cysteine 117, which acts as the S-palmitoyl cysteine intermediate. The chain crosses the membrane as a helical span at residues 132 to 152; sequence FIMFSIYTSSSCLYSLVIGVA. Residues 153 to 165 lie on the Lumenal side of the membrane; the sequence is YLTIEYSISFENP. Residues 166 to 186 traverse the membrane as a helical segment; that stretch reads LTFLTLLPLSTGYFFLGLISG. At 187–188 the chain is on the cytoplasmic side; it reads LQ. A helical membrane pass occupies residues 189–209; that stretch reads FFLVIMLYIWLGIGLVSVGFC. Topologically, residues 210–276 are lumenal; sequence CQQLLLVARG…WQVYHDHKHD (67 aa).

Belongs to the DHHC palmitoyltransferase family.

It localises to the endoplasmic reticulum membrane. The protein resides in the golgi apparatus membrane. The catalysed reaction is L-cysteinyl-[protein] + hexadecanoyl-CoA = S-hexadecanoyl-L-cysteinyl-[protein] + CoA. In terms of biological role, palmitoyltransferase that could catalyze the addition of palmitate onto various protein substrates and be involved in a variety of cellular processes. The chain is Palmitoyltransferase ZDHHC22 (zdhhc22) from Danio rerio (Zebrafish).